The following is a 312-amino-acid chain: tRNA-dihydrouridine(16) synthase (312 aa).

FMN contacts are provided by residues 7–9 and Gln-68; that span reads PMQ. The active-site Proton donor is Cys-98. Residues Lys-139, 200 to 202, and 224 to 225 each bind FMN; these read NGE and GR.

Belongs to the Dus family. DusC subfamily. FMN is required as a cofactor.

It carries out the reaction 5,6-dihydrouridine(16) in tRNA + NADP(+) = uridine(16) in tRNA + NADPH + H(+). It catalyses the reaction 5,6-dihydrouridine(16) in tRNA + NAD(+) = uridine(16) in tRNA + NADH + H(+). Functionally, catalyzes the synthesis of 5,6-dihydrouridine (D), a modified base found in the D-loop of most tRNAs, via the reduction of the C5-C6 double bond in target uridines. Specifically modifies U16 in tRNAs. The chain is tRNA-dihydrouridine(16) synthase from Pasteurella multocida (strain Pm70).